Reading from the N-terminus, the 273-residue chain is 3-methyl-2-oxobutanoate hydroxymethyltransferase (273 aa).

Mg(2+) contacts are provided by D53 and D92. 3-methyl-2-oxobutanoate contacts are provided by residues 53 to 54 (DS), D92, and K122. E124 contributes to the Mg(2+) binding site. E191 functions as the Proton acceptor in the catalytic mechanism.

This sequence belongs to the PanB family. Homodecamer; pentamer of dimers. It depends on Mg(2+) as a cofactor.

The protein resides in the cytoplasm. The catalysed reaction is 3-methyl-2-oxobutanoate + (6R)-5,10-methylene-5,6,7,8-tetrahydrofolate + H2O = 2-dehydropantoate + (6S)-5,6,7,8-tetrahydrofolate. Its pathway is cofactor biosynthesis; (R)-pantothenate biosynthesis; (R)-pantoate from 3-methyl-2-oxobutanoate: step 1/2. Catalyzes the reversible reaction in which hydroxymethyl group from 5,10-methylenetetrahydrofolate is transferred onto alpha-ketoisovalerate to form ketopantoate. This Bacteroides thetaiotaomicron (strain ATCC 29148 / DSM 2079 / JCM 5827 / CCUG 10774 / NCTC 10582 / VPI-5482 / E50) protein is 3-methyl-2-oxobutanoate hydroxymethyltransferase.